The primary structure comprises 247 residues: UPF0246 protein LSEI_2080 (247 aa).

This sequence belongs to the UPF0246 family.

This Lacticaseibacillus paracasei (strain ATCC 334 / BCRC 17002 / CCUG 31169 / CIP 107868 / KCTC 3260 / NRRL B-441) (Lactobacillus paracasei) protein is UPF0246 protein LSEI_2080.